Reading from the N-terminus, the 296-residue chain is Nitrogenase iron protein (296 aa).

11 to 18 (GKGGIGKS) provides a ligand contact to ATP. Cys99 contributes to the [4Fe-4S] cluster binding site. Arg102 bears the ADP-ribosylarginine; by dinitrogenase reductase ADP-ribosyltransferase mark. Cys133 is a binding site for [4Fe-4S] cluster.

It belongs to the NifH/BchL/ChlL family. In terms of assembly, homodimer. Requires [4Fe-4S] cluster as cofactor. In terms of processing, the reversible ADP-ribosylation of Arg-102 inactivates the nitrogenase reductase and regulates nitrogenase activity.

It carries out the reaction N2 + 8 reduced [2Fe-2S]-[ferredoxin] + 16 ATP + 16 H2O = H2 + 8 oxidized [2Fe-2S]-[ferredoxin] + 2 NH4(+) + 16 ADP + 16 phosphate + 6 H(+). The key enzymatic reactions in nitrogen fixation are catalyzed by the nitrogenase complex, which has 2 components: the iron protein and the molybdenum-iron protein. The chain is Nitrogenase iron protein (nifH1) from Sinorhizobium fredii (strain NBRC 101917 / NGR234).